We begin with the raw amino-acid sequence, 156 residues long: Ribosome maturation factor RimP (156 aa).

The protein belongs to the RimP family.

The protein localises to the cytoplasm. Its function is as follows. Required for maturation of 30S ribosomal subunits. This chain is Ribosome maturation factor RimP, found in Synechococcus sp. (strain JA-2-3B'a(2-13)) (Cyanobacteria bacterium Yellowstone B-Prime).